A 293-amino-acid chain; its full sequence is MQVFADIAVLREQIKQIKREGRRVAFVPTMGNLHEGHLTLVRKARELADVVVVSIFVNPMQFDRAEDLKNYPRTLEEDLSKLNGEGVDLVLTPTPETMYPQGLDKQTFVEVPGLSYMLEGASRPGHFRGVATIVTKLFNIVQPDVACFGEKDFQQLAVIRQMVEDLCMDIEIVGVATVRELDGLAMSSRNNLLTLDERQRAPVLARTMRWISSAIRGGRDDYPSIIEDAVDQLRAADLEPDEIFIRDARTLLPISSESKQAVILMSAFLGKVRLIDNQVLDLQTDTKASSEEE.

30–37 (MGNLHEGH) contributes to the ATP binding site. Residue histidine 37 is the Proton donor of the active site. Glutamine 61 contacts (R)-pantoate. Glutamine 61 provides a ligand contact to beta-alanine. 149-152 (GEKD) contributes to the ATP binding site. Residue glutamine 155 coordinates (R)-pantoate. ATP contacts are provided by residues valine 178 and 186 to 189 (MSSR).

This sequence belongs to the pantothenate synthetase family. As to quaternary structure, homodimer.

It localises to the cytoplasm. The enzyme catalyses (R)-pantoate + beta-alanine + ATP = (R)-pantothenate + AMP + diphosphate + H(+). Its pathway is cofactor biosynthesis; (R)-pantothenate biosynthesis; (R)-pantothenate from (R)-pantoate and beta-alanine: step 1/1. Its function is as follows. Catalyzes the condensation of pantoate with beta-alanine in an ATP-dependent reaction via a pantoyl-adenylate intermediate. This is Pantothenate synthetase from Vibrio cholerae serotype O1 (strain ATCC 39541 / Classical Ogawa 395 / O395).